A 157-amino-acid chain; its full sequence is Cytochrome c-type biogenesis protein CcmE (157 aa).

The Cytoplasmic segment spans residues 1 to 7; it reads MTPRQRR. The chain crosses the membrane as a helical; Signal-anchor for type II membrane protein span at residues 8–28; sequence LGLLAAALACCGVAAALVLNA. Over 29–157 the chain is Periplasmic; sequence FRANLVFFFS…GAMAAQELRR (129 aa). H123 and Y127 together coordinate heme.

It belongs to the CcmE/CycJ family.

The protein resides in the cell inner membrane. Heme chaperone required for the biogenesis of c-type cytochromes. Transiently binds heme delivered by CcmC and transfers the heme to apo-cytochromes in a process facilitated by CcmF and CcmH. This is Cytochrome c-type biogenesis protein CcmE from Cupriavidus taiwanensis (strain DSM 17343 / BCRC 17206 / CCUG 44338 / CIP 107171 / LMG 19424 / R1) (Ralstonia taiwanensis (strain LMG 19424)).